The following is a 61-amino-acid chain: Large ribosomal subunit protein eL24 (61 aa).

Zn(2+)-binding residues include cysteine 7, cysteine 10, cysteine 33, and cysteine 37. The C4-type zinc-finger motif lies at 7–37 (CSFCGKEIPPATGLMYIRNDGSILWFCSNKC).

Belongs to the eukaryotic ribosomal protein eL24 family. As to quaternary structure, part of the 50S ribosomal subunit. Forms a cluster with proteins L3 and L14. Requires Zn(2+) as cofactor.

Functionally, binds to the 23S rRNA. The sequence is that of Large ribosomal subunit protein eL24 from Sulfurisphaera tokodaii (strain DSM 16993 / JCM 10545 / NBRC 100140 / 7) (Sulfolobus tokodaii).